A 204-amino-acid chain; its full sequence is Secreted phosphoprotein 24 (204 aa).

The first 23 residues, 1-23 (MEKRAMRMLAMFVLGTSFWSCAG), serve as a signal peptide directing secretion. 2 cysteine pairs are disulfide-bonded: cysteine 86–cysteine 97 and cysteine 110–cysteine 128. At serine 90 the chain carries Phosphoserine. Phosphoserine is present on residues serine 138, serine 139, serine 166, and serine 175. The disordered stretch occupies residues 179-204 (MRRFPPPGNRSFPNQWPRARTNTGFE).

It belongs to the SPP2 family. In terms of processing, multiply phosphorylated at serine residues. Post-translationally, phosphorylation sites are present in the extracellular medium.

It localises to the secreted. Functionally, could coordinate an aspect of bone turnover. The chain is Secreted phosphoprotein 24 (SPP2) from Sus scrofa (Pig).